We begin with the raw amino-acid sequence, 167 residues long: Respiratory supercomplex factor 1-A, mitochondrial (167 aa).

One can recognise an HIG1 domain in the interval 1 to 86 (MCSDFEEETS…TERKQRREFE (86 aa)). The next 2 helical transmembrane spans lie at 21-38 (EPLI…LYRA) and 53-75 (MFRA…GMYY). A coiled-coil region spans residues 75–107 (YKTERKQRREFEKKVEERKAQEKRDAWLRELEA).

It belongs to the RCF1 family. As to quaternary structure, associates with the respiratory chain complex III/complex IV supercomplex.

It localises to the mitochondrion membrane. Functionally, cytochrome c oxidase subunit which plays a role in assembly of respiratory supercomplexes. The sequence is that of Respiratory supercomplex factor 1-A, mitochondrial (rcf1-A) from Talaromyces marneffei (strain ATCC 18224 / CBS 334.59 / QM 7333) (Penicillium marneffei).